Consider the following 546-residue polypeptide: MNKFKVNISGMTCTGCEKHVESALEKIGAKNIESSYRRGEAVFELPDDIEVESAIKAIDEANYQAGEIEEVSSLENVALINEDNYDLLIIGSGAAAFSSAIKAIEYGAKVGMIERGTVGGTCVNIGCVPSKTLLRAGEIIHLSKDNPFIGLQTSAGEVDLASLITQKDKLVSELRNQKYMDLIDEYNFDLIKGEAKFVDASTVEVNGAKLSAKRFLIATGASPSLPQISGLEKMDYLTSTTLLELKKIPKRLTVIGSGYIGMELGQLFHHLGSEITLMQRSERLLKEYDPEISESVEKALIEQGINLVKGATFERVEQSGEIKRVYVTVNGSREVIESDQLLVATGRKPNTDSLNLSAAGVETGKNNEILINDFGQTSNEKIYAAGDVTLGPQFVYVAAYEGGIITDNAIGGLNKKIDLSVVPAVTFTNPTVATVGLTEEQAKEKGYDVKTSVLPLDAVPRAIVNRETTGVFKLVADAETLKVLGVHIVSENAGDVIYAASLAVKFGLTVEDLTETLAPYLTMAEGLKLAALTFDKDIWKLSCCAG.

The HMA domain maps to Asn-2–Gly-66. 2 residues coordinate a metal cation: Cys-13 and Cys-16. 3 residues coordinate FAD: Ala-96, Gly-116, and Thr-121. An intrachain disulfide couples Cys-122 to Cys-127. FAD-binding residues include Lys-131 and Ala-195. NAD(+) is bound by residues Gly-256–Glu-263 and Gly-346. FAD is bound by residues Asp-387 and Val-395. Hg(2+)-binding residues include Cys-543 and Cys-544.

This sequence belongs to the class-I pyridine nucleotide-disulfide oxidoreductase family. As to quaternary structure, homodimer. FAD serves as cofactor.

It carries out the reaction Hg + NADP(+) + H(+) = Hg(2+) + NADPH. Its activity is regulated as follows. Uses NADPH as the preferred electron donor, but shows slight activity with NADH as well. Inhibited by Cu(2+), Cd(2+), Zn(2+) and Co(2+), with Cu(2+) showing the strongest inhibition. Enzyme activity is enhanced by b-mercaptoethanol and NaCl up to concentrations of 500 uM and 100 mM respectively, followed by inhibition at higher concentrations. In terms of biological role, resistance to Hg(2+) in bacteria appears to be governed by a specialized system which includes mercuric reductase. MerA protein is responsible for volatilizing mercury as Hg(0). Catalyzes reduction of Hg(2+) to elemental Hg, which is volatile and can diffuse out of cells passively. Plays a pivotal role in mercury resistance and cell protection. In Lysinibacillus sphaericus (Bacillus sphaericus), this protein is Mercuric reductase.